The sequence spans 59 residues: Small ribosomal subunit protein bS21 (59 aa).

Residues glutamate 39–arginine 59 are disordered. Over residues tyrosine 45–arginine 59 the composition is skewed to basic residues.

This sequence belongs to the bacterial ribosomal protein bS21 family.

In Prochlorococcus marinus (strain SARG / CCMP1375 / SS120), this protein is Small ribosomal subunit protein bS21.